A 201-amino-acid polypeptide reads, in one-letter code: Probable GTP-binding protein EngB (201 aa).

Residues 22 to 197 (RLPEYAFIGR…LDYIDSINQE (176 aa)) form the EngB-type G domain. GTP is bound by residues 30–37 (GRSNVGKS), 57–61 (GKTQL), 75–78 (DLPG), 142–145 (TKAD), and 173–178 (VFITSS). Mg(2+) contacts are provided by Ser-37 and Thr-59.

This sequence belongs to the TRAFAC class TrmE-Era-EngA-EngB-Septin-like GTPase superfamily. EngB GTPase family. The cofactor is Mg(2+).

In terms of biological role, necessary for normal cell division and for the maintenance of normal septation. The sequence is that of Probable GTP-binding protein EngB from Porphyromonas gingivalis (strain ATCC 33277 / DSM 20709 / CIP 103683 / JCM 12257 / NCTC 11834 / 2561).